We begin with the raw amino-acid sequence, 866 residues long: Leucine--tRNA ligase (866 aa).

Positions Pro42–His52 match the 'HIGH' region motif. The 'KMSKS' region signature appears at Thr624–Ser628. Residue Lys627 participates in ATP binding.

This sequence belongs to the class-I aminoacyl-tRNA synthetase family.

The protein resides in the cytoplasm. The enzyme catalyses tRNA(Leu) + L-leucine + ATP = L-leucyl-tRNA(Leu) + AMP + diphosphate. This Nitrosospira multiformis (strain ATCC 25196 / NCIMB 11849 / C 71) protein is Leucine--tRNA ligase.